A 485-amino-acid polypeptide reads, in one-letter code: MDLTKLTAHELKDMLSNKEVKAEEITKAFLDRINLVDNKLGAYLYVSEEEAIKKAKEIDGKIEKNEELKALSGIPVGIKDNINVKGMQNTCASKILEGYTSPYDAHVTEKIKQEEGIILGKLNMDEFAMGSSTENSAFKLAKNPWDLERVPGGSSGGSAVAVAGSEATLSLGTDTGGSVRQPASFCGVVGLKPTYGRISRSGVVAFGSTLDQVGPMGKDVEDCALLTSVIAGLDKKDFTTVDKEVPDYKKSLTKDIKGKRIGIPKEFFGDGLDKNVRKSVEEAIKVLEANGAEVKPCSLPLMDYALSAYYIISSAEASSNLARFDGIRYGYRSKNFKDAKDIYLKSRSEGFGDEVKRRIMLGTYVLSAGYYDAYYKKALKVRKLIKDDFQRVFKEFDAIVSPTSPTTAFKVGEKKDDVMSMYLSDIYTVPISVAGVPAISLPCGMIDGLPVGLQIISDYFKEDVLFNLAYNYEQSVDFHKMRADF.

Catalysis depends on charge relay system residues lysine 79 and serine 154. The Acyl-ester intermediate role is filled by serine 178.

The protein belongs to the amidase family. GatA subfamily. In terms of assembly, heterotrimer of A, B and C subunits.

It carries out the reaction L-glutamyl-tRNA(Gln) + L-glutamine + ATP + H2O = L-glutaminyl-tRNA(Gln) + L-glutamate + ADP + phosphate + H(+). Its function is as follows. Allows the formation of correctly charged Gln-tRNA(Gln) through the transamidation of misacylated Glu-tRNA(Gln) in organisms which lack glutaminyl-tRNA synthetase. The reaction takes place in the presence of glutamine and ATP through an activated gamma-phospho-Glu-tRNA(Gln). This is Glutamyl-tRNA(Gln) amidotransferase subunit A from Clostridium botulinum (strain ATCC 19397 / Type A).